The sequence spans 212 residues: 3-isopropylmalate dehydratase small subunit (212 aa).

Belongs to the LeuD family. LeuD type 1 subfamily. As to quaternary structure, heterodimer of LeuC and LeuD.

It catalyses the reaction (2R,3S)-3-isopropylmalate = (2S)-2-isopropylmalate. It participates in amino-acid biosynthesis; L-leucine biosynthesis; L-leucine from 3-methyl-2-oxobutanoate: step 2/4. Catalyzes the isomerization between 2-isopropylmalate and 3-isopropylmalate, via the formation of 2-isopropylmaleate. The polypeptide is 3-isopropylmalate dehydratase small subunit (Nitrosomonas eutropha (strain DSM 101675 / C91 / Nm57)).